We begin with the raw amino-acid sequence, 316 residues long: Ribosomal RNA small subunit methyltransferase H (316 aa).

S-adenosyl-L-methionine-binding positions include 36-38 (GGH), D56, F83, D104, and Q111.

The protein belongs to the methyltransferase superfamily. RsmH family.

It is found in the cytoplasm. The enzyme catalyses cytidine(1402) in 16S rRNA + S-adenosyl-L-methionine = N(4)-methylcytidine(1402) in 16S rRNA + S-adenosyl-L-homocysteine + H(+). Functionally, specifically methylates the N4 position of cytidine in position 1402 (C1402) of 16S rRNA. In Protochlamydia amoebophila (strain UWE25), this protein is Ribosomal RNA small subunit methyltransferase H.